A 332-amino-acid chain; its full sequence is Zinc finger protein CONSTANS-LIKE 13 (332 aa).

Positions 13, 16, 36, 41, 56, 59, 79, and 84 each coordinate Zn(2+). The B box-type 1; atypical zinc finger occupies 13-55 (CDYCDSSVALVYCKADSAKLCLACDKQVHVANQLFAKHFRSLL). Residues 56–96 (CDSCNESPSSLFCETERSVLCQNCDWQHHTASSSLHSRRPF) form a B box-type 2; atypical zinc finger. One can recognise a CCT domain in the interval 287 to 329 (RNSALSRYKEKKKSRRYEKHIRYESRKVRAESRTRIRGRFAKA).

Belongs to the CONSTANS family.

The protein localises to the nucleus. This chain is Zinc finger protein CONSTANS-LIKE 13 (COL13), found in Arabidopsis thaliana (Mouse-ear cress).